Reading from the N-terminus, the 522-residue chain is Sterol O-acyltransferase 2 (522 aa).

Disordered regions lie at residues 1–36 (MEPGGARLRLQRTEGLGGERERQPCGDGNTETHRAP) and 74–96 (SYPSQDKPLPPPPPGSLSRTQEP). Residues 1-120 (MEPGGARLRL…LDELMEVQHF (120 aa)) lie on the Cytoplasmic side of the membrane. A compositionally biased stretch (basic and acidic residues) spans 17 to 36 (GGERERQPCGDGNTETHRAP). His-119 lines the cholesterol pocket. A helical transmembrane segment spans residues 121–142 (RTIYHMFIAGLCVFIISTLAID). At 143–162 (FIDEGRLLLEFDLLIFSFGQ) the chain is on the lumenal side. Residues 163 to 188 (LPLALVTWVPMFLSTLLAPYQALRLW) traverse the membrane as a helical segment. At 189 to 196 (ARGTWTQA) the chain is on the cytoplasmic side. Residues 197–220 (TGLGCALLAAHAVVLCALPVHVAV) form a helical membrane-spanning segment. Residues 221–228 (EHQLPPAS) lie on the Lumenal side of the membrane. A helical membrane pass occupies residues 229–252 (RCVLVFEQVRFLMKSYSFLREAVP). The Cytoplasmic segment spans residues 253–293 (GTLRARRGEGIQAPSFSSYLYFLFCPTLIYRETYPRTPYVR). Cys-277 is modified (cysteine sulfenic acid (-SOH); alternate). Cys-277 is covalently cross-linked (Glycyl cysteine thioester (Cys-Gly) (interchain with G-Cter in ubiquitin); alternate). A helical transmembrane segment spans residues 294 to 326 (WNYVAKNFAQALGCVLYACFILGRLCVPVFANM). The Lumenal segment spans residues 327-343 (SREPFSTRALVLSILHA). A helical membrane pass occupies residues 344–369 (TLPGIFMLLLIFFAFLHCWLNAFAEM). At 370–417 (LRFGDRMFYRDWWNSTSFSNYYRTWNVVVHDWLYSYVYQDGLRLLGAR) the chain is on the cytoplasmic side. Positions 377–383 (FYRDWWN) match the FYXDWWN motif motif. An acyl-CoA-binding residues include Asn-389, Arg-392, Asn-395, His-399, Tyr-407, and Ser-430. Residues 418 to 442 (ARGVAMLGVFLVSAVAHEYIFCFVL) form a helical membrane-spanning segment. Residue His-434 is part of the active site. Residues 443–448 (GFFYPV) are Lumenal-facing. A helical transmembrane segment spans residues 449 to 464 (MLILFLVIGGMLNFMM). Topologically, residues 465 to 470 (HDQRTG) are cytoplasmic. The helical transmembrane segment at 471–502 (PAWNVLMWTMLFLGQGIQVSLYCQEWYARRHC) threads the bilayer. Topologically, residues 503–522 (PLPQATFWGLVTPRSWSCHT) are lumenal.

This sequence belongs to the membrane-bound acyltransferase family. Sterol o-acyltransferase subfamily. As to quaternary structure, may form homo- or heterodimers. Interacts with INSIG1; the interaction is direct and promotes association with AMFR/gp78. Post-translationally, polyubiquitinated by AMFR/gp78 at Cys-277, leading to its degradation when the lipid levels are low. Association with AMFR/gp78 is mediated via interaction with INSIG1. High concentration of cholesterol and fatty acid results in Cys-277 oxidation, preventing ubiquitination at the same site, resulting in protein stabilization. In terms of processing, oxidized at Cys-277: high concentration of cholesterol and fatty acid induce reactive oxygen species, which oxidizes Cys-277, preventing ubiquitination at the same site, and resulting in protein stabilization. Expression seems confined in hepatocytes and enterocytes.

It localises to the endoplasmic reticulum membrane. The enzyme catalyses a sterol + a long-chain fatty acyl-CoA = a long-chain 3-hydroxysterol ester + CoA. It catalyses the reaction cholesterol + an acyl-CoA = a cholesterol ester + CoA. It carries out the reaction cholesterol + (9Z)-octadecenoyl-CoA = cholesteryl (9Z-octadecenoate) + CoA. The catalysed reaction is (5Z,8Z,11Z,14Z,17Z)-eicosapentaenoyl-CoA + cholesterol = (5Z,8Z,11Z,14Z,17Z-eicosapentaenoyl)-cholesterol + CoA. The enzyme catalyses (9Z,12Z,15Z)-octadecatrienoyl-CoA + cholesterol = (9Z,12Z,15Z-octadecatrienoyl)-cholesterol + CoA. It catalyses the reaction (5Z,8Z,11Z,14Z)-eicosatetraenoyl-CoA + cholesterol = cholesteryl (5Z,8Z,11Z,14Z)-eicosatetraenoate + CoA. Catalyzes the formation of fatty acid-cholesterol esters, which are less soluble in membranes than cholesterol. Plays a role in lipoprotein assembly and dietary cholesterol absorption. Utilizes oleoyl-CoA ((9Z)-octadecenoyl-CoA) and linolenoyl-CoA ((9Z,12Z,15Z)-octadecatrienoyl-CoA) as substrates. May provide cholesteryl esters for lipoprotein secretion from hepatocytes and intestinal mucosa. Functionally, has lower enzymatic activity compared to isoform 1. The chain is Sterol O-acyltransferase 2 from Homo sapiens (Human).